A 380-amino-acid chain; its full sequence is Beta-1,3-N-acetylglucosaminyltransferase lunatic fringe (380 aa).

Topologically, residues 1–8 (MLKRCGRR) are cytoplasmic. A helical; Signal-anchor for type II membrane protein membrane pass occupies residues 9–29 (LLLALAGALLACLLVLTADPP). Residues 30 to 380 (PPPVPAERGR…TSWCPRSAIF (351 aa)) are Lumenal-facing. Residues 85 to 110 (SRRDVGPPPGGAPRPADGPPRPLAEP) form a disordered region. Positions 90–107 (GPPPGGAPRPADGPPRPL) are enriched in pro residues. Arg130 is a binding site for substrate. N-linked (GlcNAc...) asparagine glycosylation is present at Asn168. 2 disulfides stabilise this stretch: Cys169–Cys180 and Cys198–Cys261. Position 202 (Asp202) interacts with substrate. Asp203 is a binding site for Mn(2+). Asp291 is a catalytic residue. His315 serves as a coordination point for Mn(2+). A disulfide bond links Cys365 and Cys374.

The protein belongs to the glycosyltransferase 31 family. Requires Mn(2+) as cofactor. It depends on Co(2+) as a cofactor. Post-translationally, a soluble form may be derived from the membrane form by proteolytic processing.

It localises to the golgi apparatus. The protein resides in the golgi apparatus membrane. The enzyme catalyses 3-O-(alpha-L-fucosyl)-L-threonyl-[EGF-like domain protein] + UDP-N-acetyl-alpha-D-glucosamine = 3-O-(N-acetyl-beta-D-glucosaminyl-(1-&gt;3)-alpha-L-fucosyl)-L-threonyl-[EGF-like domain protein] + UDP + H(+). It carries out the reaction 3-O-(alpha-L-fucosyl)-L-seryl-[EGF-like domain protein] + UDP-N-acetyl-alpha-D-glucosamine = 3-O-(N-acetyl-beta-D-glucosaminyl-(1-&gt;3)-alpha-L-fucosyl)-L-seryl-[EGF-like domain protein] + UDP + H(+). Its function is as follows. Glycosyltransferase that initiates the elongation of O-linked fucose residues attached to EGF-like repeats in the extracellular domain of Notch molecules. Modulates NOTCH1 activity by modifying O-fucose residues at specific EGF-like domains resulting in inhibition of NOTCH1 activation by JAG1 and enhancement of NOTCH1 activation by DLL1 via an increase in its binding to DLL1. Decreases the binding of JAG1 to NOTCH2 but not that of DLL1. Essential mediator of somite segmentation and patterning. This Bos taurus (Bovine) protein is Beta-1,3-N-acetylglucosaminyltransferase lunatic fringe (LFNG).